The following is a 501-amino-acid chain: L-arabinose isomerase (501 aa).

4 residues coordinate Mn(2+): E306, E333, H350, and H449.

Belongs to the arabinose isomerase family. Mn(2+) serves as cofactor.

The catalysed reaction is beta-L-arabinopyranose = L-ribulose. It participates in carbohydrate degradation; L-arabinose degradation via L-ribulose; D-xylulose 5-phosphate from L-arabinose (bacterial route): step 1/3. Its function is as follows. Catalyzes the conversion of L-arabinose to L-ribulose. The polypeptide is L-arabinose isomerase (Mycolicibacterium smegmatis (strain ATCC 700084 / mc(2)155) (Mycobacterium smegmatis)).